The following is a 207-amino-acid chain: Large ribosomal subunit protein bL20 (207 aa).

Positions 117–161 (QETQPQPEEKTSLQPEKVLSTELSEEKSDDTLETKPQTTQVKAKK) are disordered. The segment covering 140-149 (SEEKSDDTLE) has biased composition (basic and acidic residues).

This sequence belongs to the bacterial ribosomal protein bL20 family.

Its function is as follows. Binds directly to 23S ribosomal RNA and is necessary for the in vitro assembly process of the 50S ribosomal subunit. It is not involved in the protein synthesizing functions of that subunit. The polypeptide is Large ribosomal subunit protein bL20 (Onion yellows phytoplasma (strain OY-M)).